Reading from the N-terminus, the 502-residue chain is Mannitol dehydrogenase 2 (502 aa).

Belongs to the mannitol dehydrogenase family.

It carries out the reaction D-mannitol + NAD(+) = D-fructose + NADH + H(+). Functionally, catalyzes the NAD(H)-dependent interconversion of D-fructose and D-mannitol in the mannitol metabolic pathway. The sequence is that of Mannitol dehydrogenase 2 from Saccharomyces cerevisiae (strain ATCC 204508 / S288c) (Baker's yeast).